The following is a 335-amino-acid chain: DNA polymerase beta (335 aa).

A Glycyl lysine isopeptide (Lys-Gly) (interchain with G-Cter in ubiquitin) cross-link involves residue lysine 41. Position 60 (lysine 60) interacts with K(+). Residue lysine 60 coordinates Na(+). Residue lysine 61 forms a Glycyl lysine isopeptide (Lys-Gly) (interchain with G-Cter in ubiquitin) linkage. K(+)-binding residues include leucine 62 and valine 65. Residues leucine 62 and valine 65 each coordinate Na(+). The Nucleophile; Schiff-base intermediate with DNA; for 5'-dRP lyase activity role is filled by lysine 72. Lysine 72 carries the post-translational modification N6-acetyllysine. Lysine 81 participates in a covalent cross-link: Glycyl lysine isopeptide (Lys-Gly) (interchain with G-Cter in ubiquitin). Arginine 83 carries the post-translational modification Omega-N-methylarginine; by PRMT6. K(+) is bound by residues threonine 101, valine 103, and isoleucine 106. Na(+)-binding residues include threonine 101, valine 103, and isoleucine 106. Arginine 149 is a dATP binding site. Arginine 149 serves as a coordination point for dCTP. Arginine 149 is a dGTP binding site. Arginine 149 is a binding site for dTTP. An Omega-N-methylarginine; by PRMT6 modification is found at arginine 152. DATP contacts are provided by serine 180, arginine 183, glycine 189, and aspartate 190. Positions 180, 183, 189, and 190 each coordinate dCTP. DGTP contacts are provided by serine 180, arginine 183, glycine 189, aspartate 190, and aspartate 192. Residues serine 180, arginine 183, glycine 189, and aspartate 190 each coordinate dTTP. Residues 183–192 (RGAESSGDMD) form a DNA-binding region. The Mg(2+) site is built by aspartate 190, aspartate 192, and aspartate 256.

The protein belongs to the DNA polymerase type-X family. In terms of assembly, monomer. Binds single-stranded DNA (ssDNA). Interacts with APEX1, LIG1, LIG3, FEN1, PCNA and XRCC1. Interacts with HUWE1/ARF-BP1, STUB1/CHIP and USP47. Interacts with FAM168A. Mg(2+) is required as a cofactor. In terms of processing, methylation by PRMT6 stimulates the polymerase activity by enhancing DNA binding and processivity. Ubiquitinated at Lys-41, Lys-61 and Lys-81: monoubiquitinated by HUWE1/ARF-BP1. Monoubiquitinated protein is then the target of STUB1/CHIP, which catalyzes polyubiquitination from monoubiquitin, leading to degradation by the proteasome. USP47 mediates the deubiquitination of monoubiquitinated protein, preventing polyubiquitination by STUB1/CHIP and its subsequent degradation.

The protein localises to the nucleus. Its subcellular location is the cytoplasm. It carries out the reaction DNA(n) + a 2'-deoxyribonucleoside 5'-triphosphate = DNA(n+1) + diphosphate. The catalysed reaction is a 5'-end 2'-deoxyribose-2'-deoxyribonucleotide-DNA = (2E,4S)-4-hydroxypenten-2-al-5-phosphate + a 5'-end 5'-phospho-2'-deoxyribonucleoside-DNA + H(+). The enzyme catalyses 2'-deoxyribonucleotide-(2'-deoxyribose 5'-phosphate)-2'-deoxyribonucleotide-DNA = a 3'-end 2'-deoxyribonucleotide-(2,3-dehydro-2,3-deoxyribose 5'-phosphate)-DNA + a 5'-end 5'-phospho-2'-deoxyribonucleoside-DNA + H(+). Functionally, repair polymerase that plays a key role in base-excision repair. During this process, the damaged base is excised by specific DNA glycosylases, the DNA backbone is nicked at the abasic site by an apurinic/apyrimidic (AP) endonuclease, and POLB removes 5'-deoxyribose-phosphate from the preincised AP site acting as a 5'-deoxyribose-phosphate lyase (5'-dRP lyase); through its DNA polymerase activity, it adds one nucleotide to the 3' end of the arising single-nucleotide gap. Conducts 'gap-filling' DNA synthesis in a stepwise distributive fashion rather than in a processive fashion as for other DNA polymerases. It is also able to cleave sugar-phosphate bonds 3' to an intact AP site, acting as an AP lyase. This Homo sapiens (Human) protein is DNA polymerase beta (POLB).